Consider the following 94-residue polypeptide: Co-chaperonin GroES (94 aa).

The protein belongs to the GroES chaperonin family. In terms of assembly, heptamer of 7 subunits arranged in a ring. Interacts with the chaperonin GroEL.

It localises to the cytoplasm. Functionally, together with the chaperonin GroEL, plays an essential role in assisting protein folding. The GroEL-GroES system forms a nano-cage that allows encapsulation of the non-native substrate proteins and provides a physical environment optimized to promote and accelerate protein folding. GroES binds to the apical surface of the GroEL ring, thereby capping the opening of the GroEL channel. In Lactobacillus helveticus (strain DPC 4571), this protein is Co-chaperonin GroES.